Reading from the N-terminus, the 493-residue chain is MEEYIMVLDQGSTRSKCILFDKKGEVLGESEREVEPIYPKLGWMEYNPVNIWASQFSVTTELLAKYNISIEKIASIGITNQRETVLVWDKRTGIPVYNAIAWQCRRTVEISEELNKKGYGKVIKEKTGLVLDPYFSATKIKWILDNVEGARKEAERGNLAFGTMDSWLIWNLTKGEKHMTDYSNASRTMLFNIHTLQWDEELLEIFQIPKSMLPEVGPSSHVYGHTDSILFGKEVPIGGVAGDQNSSLFGQTAFEEGAAKNTYGTGCFMLMNTGNKPINSQKGLITTIAWGLDGEVTYALEGSVFMAGEGINWIKDNLRMIDSLEDAEEYALSVEDTNNVYMVPAFGGLGAPYWNPEAKGVVIGLTRGSKKEHFIRAVIESLAYQSYDVLKAMEEDSGIVLKNLRVDGQYSVNNFLMQFQSDILNCKVEKPKNILNIAGLGAAYFAGLAVGFWKNKEDILKNNGIEKEFNSSIDDRRRKVLVEGWKEAIKRTI.

An ADP-binding site is contributed by serine 12. ATP contacts are provided by serine 12 and threonine 13. Serine 12 is a sn-glycerol 3-phosphate binding site. Residue lysine 16 participates in ADP binding. Positions 82, 83, 134, and 243 each coordinate sn-glycerol 3-phosphate. Arginine 82, glutamate 83, tyrosine 134, aspartate 243, and glutamine 244 together coordinate glycerol. The ADP site is built by threonine 265 and glycine 308. ATP contacts are provided by threonine 265, glycine 308, and asparagine 312. ADP is bound at residue asparagine 413.

The protein belongs to the FGGY kinase family. In terms of assembly, homotetramer and homodimer (in equilibrium).

The enzyme catalyses glycerol + ATP = sn-glycerol 3-phosphate + ADP + H(+). Its pathway is polyol metabolism; glycerol degradation via glycerol kinase pathway; sn-glycerol 3-phosphate from glycerol: step 1/1. Activated by phosphorylation and inhibited by fructose 1,6-bisphosphate (FBP). Its function is as follows. Key enzyme in the regulation of glycerol uptake and metabolism. Catalyzes the phosphorylation of glycerol to yield sn-glycerol 3-phosphate. This chain is Glycerol kinase 2, found in Clostridium tetani (strain Massachusetts / E88).